The primary structure comprises 95 residues: Aspartyl/glutamyl-tRNA(Asn/Gln) amidotransferase subunit C (95 aa).

It belongs to the GatC family. As to quaternary structure, heterotrimer of A, B and C subunits.

The enzyme catalyses L-glutamyl-tRNA(Gln) + L-glutamine + ATP + H2O = L-glutaminyl-tRNA(Gln) + L-glutamate + ADP + phosphate + H(+). It carries out the reaction L-aspartyl-tRNA(Asn) + L-glutamine + ATP + H2O = L-asparaginyl-tRNA(Asn) + L-glutamate + ADP + phosphate + 2 H(+). Its function is as follows. Allows the formation of correctly charged Asn-tRNA(Asn) or Gln-tRNA(Gln) through the transamidation of misacylated Asp-tRNA(Asn) or Glu-tRNA(Gln) in organisms which lack either or both of asparaginyl-tRNA or glutaminyl-tRNA synthetases. The reaction takes place in the presence of glutamine and ATP through an activated phospho-Asp-tRNA(Asn) or phospho-Glu-tRNA(Gln). The protein is Aspartyl/glutamyl-tRNA(Asn/Gln) amidotransferase subunit C of Vesicomyosocius okutanii subsp. Calyptogena okutanii (strain HA).